The sequence spans 616 residues: Chaperone protein HscA (616 aa).

The protein belongs to the heat shock protein 70 family.

In terms of biological role, chaperone involved in the maturation of iron-sulfur cluster-containing proteins. Has a low intrinsic ATPase activity which is markedly stimulated by HscB. Involved in the maturation of IscU. This Cronobacter sakazakii (strain ATCC BAA-894) (Enterobacter sakazakii) protein is Chaperone protein HscA.